Consider the following 87-residue polypeptide: Exodeoxyribonuclease 7 small subunit (87 aa).

It belongs to the XseB family. Heterooligomer composed of large and small subunits.

It is found in the cytoplasm. The enzyme catalyses Exonucleolytic cleavage in either 5'- to 3'- or 3'- to 5'-direction to yield nucleoside 5'-phosphates.. Its function is as follows. Bidirectionally degrades single-stranded DNA into large acid-insoluble oligonucleotides, which are then degraded further into small acid-soluble oligonucleotides. This is Exodeoxyribonuclease 7 small subunit from Xanthomonas campestris pv. campestris (strain 8004).